Here is a 215-residue protein sequence, read N- to C-terminus: Ribonuclease T (215 aa).

In terms of domain architecture, Exonuclease spans Val-20 to Phe-194. The Mg(2+) site is built by Asp-23, Glu-25, His-181, and Asp-186. Residue His-181 is the Proton donor/acceptor of the active site.

The protein belongs to the RNase T family. As to quaternary structure, homodimer. The cofactor is Mg(2+).

Functionally, trims short 3' overhangs of a variety of RNA species, leaving a one or two nucleotide 3' overhang. Responsible for the end-turnover of tRNA: specifically removes the terminal AMP residue from uncharged tRNA (tRNA-C-C-A). Also appears to be involved in tRNA biosynthesis. This Yersinia pestis protein is Ribonuclease T.